We begin with the raw amino-acid sequence, 340 residues long: Phosphoribosylformylglycinamidine cyclo-ligase (340 aa).

The protein belongs to the AIR synthase family.

The protein resides in the cytoplasm. The enzyme catalyses 2-formamido-N(1)-(5-O-phospho-beta-D-ribosyl)acetamidine + ATP = 5-amino-1-(5-phospho-beta-D-ribosyl)imidazole + ADP + phosphate + H(+). The protein operates within purine metabolism; IMP biosynthesis via de novo pathway; 5-amino-1-(5-phospho-D-ribosyl)imidazole from N(2)-formyl-N(1)-(5-phospho-D-ribosyl)glycinamide: step 2/2. This chain is Phosphoribosylformylglycinamidine cyclo-ligase, found in Streptococcus pyogenes serotype M28 (strain MGAS6180).